A 237-amino-acid polypeptide reads, in one-letter code: 7-cyano-7-deazaguanine synthase (237 aa).

9-19 is an ATP binding site; it reads YSGGLDSTTCL. Cys189, Cys199, Cys202, and Cys205 together coordinate Zn(2+).

The protein belongs to the QueC family. Zn(2+) serves as cofactor.

It catalyses the reaction 7-carboxy-7-deazaguanine + NH4(+) + ATP = 7-cyano-7-deazaguanine + ADP + phosphate + H2O + H(+). It participates in purine metabolism; 7-cyano-7-deazaguanine biosynthesis. Its function is as follows. Catalyzes the ATP-dependent conversion of 7-carboxy-7-deazaguanine (CDG) to 7-cyano-7-deazaguanine (preQ(0)). The sequence is that of 7-cyano-7-deazaguanine synthase from Geobacter metallireducens (strain ATCC 53774 / DSM 7210 / GS-15).